The chain runs to 173 residues: MGSPCHFALFELKPEFQLDLDQLATRYRELARNVHPDRFADAPEREQRLALERSASLNEAYQTLKSPPKRARYLLAMNGNEVPLEVTVHDPEFLLQQMQLREDLEDLQDEADLAGVATFKRQLKVAQDELNQSFAACWNDAAQREHAEKLMRRMQFLDKLSHEVRQLEERLDD.

In terms of domain architecture, J spans 5-77; it reads CHFALFELKP…PKRARYLLAM (73 aa).

It belongs to the HscB family. In terms of assembly, interacts with HscA and stimulates its ATPase activity.

Co-chaperone involved in the maturation of iron-sulfur cluster-containing proteins. Seems to help targeting proteins to be folded toward HscA. This chain is Co-chaperone protein HscB homolog, found in Pseudomonas syringae pv. tomato (strain ATCC BAA-871 / DC3000).